Reading from the N-terminus, the 100-residue chain is Nucleoid-associated protein MYPU_0500 (100 aa).

It belongs to the YbaB/EbfC family. In terms of assembly, homodimer.

Its subcellular location is the cytoplasm. The protein localises to the nucleoid. Functionally, binds to DNA and alters its conformation. May be involved in regulation of gene expression, nucleoid organization and DNA protection. The protein is Nucleoid-associated protein MYPU_0500 of Mycoplasmopsis pulmonis (strain UAB CTIP) (Mycoplasma pulmonis).